A 675-amino-acid chain; its full sequence is Myosin-binding protein 3 (675 aa).

A helical membrane pass occupies residues 17-37; the sequence is ITVILVYAFLEWLLMFFIFLN. Disordered regions lie at residues 225–274 and 286–315; these read LRSI…EEET and SKNFTGSQIEEEEEDREETTKELDPETPTS. Basic and acidic residues predominate over residues 238 to 251; it reads AKSRVSEDEQRNDD. Residues 355-453 enclose the GTD-binding domain; that stretch reads RTIERLRETV…QLQRELEVYR (99 aa). Residues 474-496 are compositionally biased toward acidic residues; sequence CEADDDDKEEENREEDNSSEMDV. 3 disordered regions span residues 474–497, 542–565, and 582–605; these read CEADDDDKEEENREEDNSSEMDVD, DKESAEDPGEFSNSYEEASNGHGG, and AENESEDGSQGLPESDEKNFGSDS. Basic and acidic residues predominate over residues 596-605; that stretch reads SDEKNFGSDS. Positions 605–633 form a coiled coil; sequence SEKLEIIKQVDSVYERLQELETDGEFLKN.

In terms of assembly, interacts with myosin XI-K.

It is found in the membrane. Its function is as follows. Membrane-anchored myosin receptors that define a distinct, plant-specific transport vesicle compartment. The sequence is that of Myosin-binding protein 3 from Arabidopsis thaliana (Mouse-ear cress).